A 145-amino-acid polypeptide reads, in one-letter code: Large ribosomal subunit protein uL13 (145 aa).

Belongs to the universal ribosomal protein uL13 family. Part of the 50S ribosomal subunit.

Functionally, this protein is one of the early assembly proteins of the 50S ribosomal subunit, although it is not seen to bind rRNA by itself. It is important during the early stages of 50S assembly. The protein is Large ribosomal subunit protein uL13 of Bacillus thuringiensis (strain Al Hakam).